The primary structure comprises 285 residues: Ribonuclease Z (285 aa).

Residues His-61, His-63, Asp-65, His-66, His-152, Asp-175, and His-239 each contribute to the Zn(2+) site. The active-site Proton acceptor is Asp-65.

This sequence belongs to the RNase Z family. In terms of assembly, homodimer. Zn(2+) is required as a cofactor.

The enzyme catalyses Endonucleolytic cleavage of RNA, removing extra 3' nucleotides from tRNA precursor, generating 3' termini of tRNAs. A 3'-hydroxy group is left at the tRNA terminus and a 5'-phosphoryl group is left at the trailer molecule.. Functionally, zinc phosphodiesterase, which displays some tRNA 3'-processing endonuclease activity. Probably involved in tRNA maturation, by removing a 3'-trailer from precursor tRNA. In Mycobacterium sp. (strain JLS), this protein is Ribonuclease Z.